The chain runs to 243 residues: Urease accessory protein UreF 2 (243 aa).

This sequence belongs to the UreF family. UreD, UreF and UreG form a complex that acts as a GTP-hydrolysis-dependent molecular chaperone, activating the urease apoprotein by helping to assemble the nickel containing metallocenter of UreC. The UreE protein probably delivers the nickel.

It localises to the cytoplasm. Required for maturation of urease via the functional incorporation of the urease nickel metallocenter. The polypeptide is Urease accessory protein UreF 2 (Brucella suis (strain ATCC 23445 / NCTC 10510)).